The following is a 563-amino-acid chain: IQCJ-SCHIP1 readthrough transcript protein (563 aa).

Residues 47-67 (ESKVKIIQRAWREYLQRQEPL) enclose the IQ domain. Disordered stretches follow at residues 63 to 150 (RQEP…VSAL), 164 to 295 (VIDE…EPPV), 312 to 336 (FREQ…NERE), and 384 to 430 (SGSD…SLDD). A compositionally biased stretch (low complexity) spans 76 to 87 (SVSSEKLSSSVS). A compositionally biased stretch (polar residues) spans 88-97 (MNTFSDSSTP). Over residues 108–143 (SDAGSSSSSSRASSQSNSTKVTPCSECKSSSSPGGS) the composition is skewed to low complexity. Over residues 168 to 182 (WAPEEDGEEEEEEDE) the composition is skewed to acidic residues. Basic and acidic residues-rich tracts occupy residues 183–199 (RDQR…REPG) and 229–238 (HQHDPQDLRH). Ser-193 carries the post-translational modification Phosphoserine. The segment covering 318-331 (RNQGQARTNSTSAQ) has biased composition (polar residues). Residues 385–399 (GSDKDSDADDSKTET) show a composition bias toward basic and acidic residues. Residues 400-411 (SLDTPLSPMSKQ) are compositionally biased toward polar residues. Positions 419 to 563 (DTTEEESESL…KHMAEKMPAK (145 aa)) are required for interaction with ankyrins. The span at 420-430 (TTEEESESLDD) shows a compositional bias: acidic residues. A coiled-coil region spans residues 500 to 534 (IGQLQVIVNDLHSQIESLNEELVQLLLIRDELHTE).

As to quaternary structure, homooligomer (via coiled coil domain). Interacts (via IQ domain) with calmodulin; the interaction is direct and lost in presence of calcium. Interacts with ANK3 (via ANK repeats); required for localization at axon initial segments (AIS) and nodes of Ranvier. Interacts with SPTBN4. Interacts with KCNQ2 and KCNQ3. As to expression, highly expressed in brain and to a lower extent in heart and kidney.

The protein resides in the cell projection. It localises to the axon. It is found in the cytoplasm. May play a role in action potential conduction in myelinated cells through the organization of molecular complexes at nodes of Ranvier and axon initial segments. May also play a role in axon outgrowth and guidance. The protein is IQCJ-SCHIP1 readthrough transcript protein of Homo sapiens (Human).